The primary structure comprises 260 residues: Centromere protein K (260 aa).

A coiled-coil region spans residues 84-173; that stretch reads EEELQKVKKE…KKLMNALGEF (90 aa).

The protein belongs to the CENP-K/MCM22 family. As to quaternary structure, component of the CENPA-HI complex, at least composed of CENPH, CENPI, CENPK, CENPL, CENPM, CENPO and CENPP.

Its subcellular location is the nucleus. It localises to the chromosome. The protein resides in the centromere. The protein localises to the kinetochore. Its function is as follows. Component of the CENPA-HI complex, a centromeric complex involved in assembly of kinetochore proteins, mitotic progression and chromosome segregation. The polypeptide is Centromere protein K (CENPK) (Gallus gallus (Chicken)).